Here is a 475-residue protein sequence, read N- to C-terminus: Tryptophan synthase beta chain 2, chloroplastic (475 aa).

The segment covering 1-21 (MATASTAATFRPSSVSASSEL) has biased composition (polar residues). A disordered region spans residues 1–44 (MATASTAATFRPSSVSASSELTHLRSPSKLPKFTPLPSARSRSS). A chloroplast-targeting transit peptide spans 1-51 (MATASTAATFRPSSVSASSELTHLRSPSKLPKFTPLPSARSRSSSSFSVSC). Residue Thr-52 is modified to N-acetylthreonine. The residue at position 170 (Lys-170) is an N6-(pyridoxal phosphate)lysine.

The protein belongs to the TrpB family. Tetramer of two alpha and two beta chains. The cofactor is pyridoxal 5'-phosphate.

It is found in the plastid. It localises to the chloroplast. It catalyses the reaction (1S,2R)-1-C-(indol-3-yl)glycerol 3-phosphate + L-serine = D-glyceraldehyde 3-phosphate + L-tryptophan + H2O. The protein operates within amino-acid biosynthesis; L-tryptophan biosynthesis; L-tryptophan from chorismate: step 5/5. In terms of biological role, the beta subunit is responsible for the synthesis of L-tryptophan from indole and L-serine. In Arabidopsis thaliana (Mouse-ear cress), this protein is Tryptophan synthase beta chain 2, chloroplastic (TSB2).